Consider the following 53-residue polypeptide: MAIKKSIRLECGECKEINYLTFKNAKKHPEKLELNKYCKRCRSAKPHKETKKK.

The protein belongs to the bacterial ribosomal protein bL33 family.

This chain is Large ribosomal subunit protein bL33, found in Malacoplasma penetrans (strain HF-2) (Mycoplasma penetrans).